Reading from the N-terminus, the 2223-residue chain is Protein Ycf2 (2223 aa).

1576–1583 serves as a coordination point for ATP; it reads GSIGTGRS.

Belongs to the Ycf2 family.

It is found in the plastid. Its subcellular location is the chloroplast stroma. Probable ATPase of unknown function. Its presence in a non-photosynthetic plant (Epifagus virginiana) and experiments in tobacco indicate that it has an essential function which is probably not related to photosynthesis. The sequence is that of Protein Ycf2 from Silene latifolia (White campion).